A 118-amino-acid chain; its full sequence is MPSTGTICSLLLLSVLLMADLAMAGSSFLSPEHQKVQQRKESKKPAAKLKPRALEGWLGPEDSGEVEGTEDKLEIRFNAPCDVGIKLSGAQSDQHGQPLGKFLQDILWEEVTEAPADK.

Residues 1-24 form the signal peptide; sequence MPSTGTICSLLLLSVLLMADLAMA. The O-decanoyl serine; alternate moiety is linked to residue Ser27. Ser27 carries the O-hexanoyl serine; alternate lipid modification. Ser27 carries the O-octanoyl serine; alternate lipid modification. The interval 29-50 is disordered; it reads LSPEHQKVQQRKESKKPAAKLK. Over residues 32 to 44 the composition is skewed to basic and acidic residues; sequence EHQKVQQRKESKK. Positions 53–76 are cleaved as a propeptide — removed in mature form; sequence ALEGWLGPEDSGEVEGTEDKLEIR. Leu99 carries the post-translational modification Leucine amide. Positions 100–118 are cleaved as a propeptide — removed in mature form; sequence GKFLQDILWEEVTEAPADK.

The protein belongs to the motilin family. O-octanoylated by GOAT/MBOAT4. O-octanoylation is essential for ghrelin activity. In terms of processing, amidation of Leu-99 is essential for obestatin activity.

Its subcellular location is the secreted. Functionally, ghrelin is the ligand for growth hormone secretagogue receptor type 1 (GHSR). Induces the release of growth hormone from the pituitary. Has an appetite-stimulating effect, induces adiposity and stimulates gastric acid secretion. Involved in growth regulation. In terms of biological role, obestatin may be the ligand for GPR39. May have an appetite-reducing effect resulting in decreased food intake. May reduce gastric emptying activity and jejunal motility. This is Appetite-regulating hormone (GHRL) from Sus scrofa (Pig).